Consider the following 451-residue polypeptide: D-inositol 3-phosphate glycosyltransferase (451 aa).

Histidine 37 is a 1D-myo-inositol 3-phosphate binding site. Residues 43 to 44 and glycine 51 each bind UDP-N-acetyl-alpha-D-glucosamine; that span reads QP. 1D-myo-inositol 3-phosphate is bound by residues 48 to 53, lysine 106, tyrosine 138, threonine 162, and arginine 182; that span reads DAGGMN. The UDP-N-acetyl-alpha-D-glucosamine site is built by arginine 259, lysine 264, and arginine 323. Tyrosine 332, arginine 333, and alanine 335 together coordinate Mg(2+). Glutamate 345 and glutamate 353 together coordinate UDP-N-acetyl-alpha-D-glucosamine. Residue threonine 359 coordinates Mg(2+).

This sequence belongs to the glycosyltransferase group 1 family. MshA subfamily. Homodimer.

The enzyme catalyses 1D-myo-inositol 3-phosphate + UDP-N-acetyl-alpha-D-glucosamine = 1D-myo-inositol 2-acetamido-2-deoxy-alpha-D-glucopyranoside 3-phosphate + UDP + H(+). Its function is as follows. Catalyzes the transfer of a N-acetyl-glucosamine moiety to 1D-myo-inositol 3-phosphate to produce 1D-myo-inositol 2-acetamido-2-deoxy-glucopyranoside 3-phosphate in the mycothiol biosynthesis pathway. The protein is D-inositol 3-phosphate glycosyltransferase of Corynebacterium kroppenstedtii (strain DSM 44385 / JCM 11950 / CIP 105744 / CCUG 35717).